The chain runs to 157 residues: Nicotinate dehydrogenase subunit A (157 aa).

A 2Fe-2S ferredoxin-type domain is found at 3–79 (TTISLQVNGQ…GRNITTLEGL (77 aa)). 4 residues coordinate [2Fe-2S] cluster: Cys-41, Cys-46, Cys-49, and Cys-61.

[2Fe-2S] cluster serves as cofactor.

It catalyses the reaction 2 Fe(III)-[cytochrome] + nicotinate + H2O = 2 Fe(II)-[cytochrome] + 6-hydroxynicotinate + 2 H(+). It functions in the pathway cofactor degradation; nicotinate degradation. Subunit of the two-component enzyme NicAB that mediates nicotinate hydroxylation, the first step in the aerobic nicotinate degradation pathway. Mediates conversion of nicotinate into 6-hydroxynicotinate (6HNA). This Pseudomonas putida (strain ATCC 47054 / DSM 6125 / CFBP 8728 / NCIMB 11950 / KT2440) protein is Nicotinate dehydrogenase subunit A (nicA).